A 562-amino-acid polypeptide reads, in one-letter code: Oxygen-dependent choline dehydrogenase (562 aa).

4 to 33 (DYIIIGAGSAGNVLATRLTEDPNTSVLLLE) contacts FAD. His-473 (proton acceptor) is an active-site residue.

Belongs to the GMC oxidoreductase family. It depends on FAD as a cofactor.

It is found in the cell membrane. It carries out the reaction choline + A = betaine aldehyde + AH2. The catalysed reaction is betaine aldehyde + NAD(+) + H2O = glycine betaine + NADH + 2 H(+). Its pathway is amine and polyamine biosynthesis; betaine biosynthesis via choline pathway; betaine aldehyde from choline (cytochrome c reductase route): step 1/1. Functionally, involved in the biosynthesis of the osmoprotectant glycine betaine. Catalyzes the oxidation of choline to betaine aldehyde and betaine aldehyde to glycine betaine at the same rate. The polypeptide is Oxygen-dependent choline dehydrogenase (Escherichia coli O157:H7).